The primary structure comprises 295 residues: MMQIPFTRIFKVIFVLSTIVAVTDCCSSRILLLREHTLKIVQHQHSHMHEHAHELQQQIQETAVELLNRLELQRKQLEASAQEEADQLHPDTDPNPDSGGQLPNADDSIAADPEQDGIILGSSTDTWLASESSTPITDSETVTTPETVTHTGEPPPDPSSSSTPDSTTPSPNDKETEIQMLPCSEAYNTSFCLNGGHCFQHPMVNNTVFHSCLCVNDYDGERCAYKSWNGDYIYSPPTAQRKVRMAHIVFSFPVLLMLSSLYVLFAAVFMLRNVPDYRRKQQQLHLHKQRFFVRC.

The signal sequence occupies residues 1–26 (MMQIPFTRIFKVIFVLSTIVAVTDCC). Topologically, residues 27-247 (SSRILLLREH…TAQRKVRMAH (221 aa)) are extracellular. 2 disordered regions span residues 78–111 (EASAQEEADQLHPDTDPNPDSGGQLPNADDSIAA) and 124–175 (TDTW…NDKE). Over residues 124-139 (TDTWLASESSTPITDS) the composition is skewed to polar residues. Composition is skewed to low complexity over residues 140–152 (ETVTTPETVTHTG) and 159–171 (SSSSTPDSTTPSP). In terms of domain architecture, EGF-like spans 179-224 (QMLPCSEAYNTSFCLNGGHCFQHPMVNNTVFHSCLCVNDYDGERCA). Cystine bridges form between Cys183–Cys198, Cys192–Cys212, and Cys214–Cys223. 2 N-linked (GlcNAc...) asparagine glycosylation sites follow: Asn188 and Asn205. Positions 215 to 245 (VNDYDGERCAYKSWNGDYIYSPPTAQRKVRM) are interaction with cni. Residues 248 to 268 (IVFSFPVLLMLSSLYVLFAAV) traverse the membrane as a helical segment. Over 269–295 (FMLRNVPDYRRKQQQLHLHKQRFFVRC) the chain is Cytoplasmic.

Interacts with cni. Expressed in nurse cells and oocyte up to oogenesis stage 7. Specifically accumulates in dorsal anterior corner of the oocyte during stages 9/10, at later stages expression is seen as an anterior ring. In stage 10 ovaries, it is concentrated between the oocyte nucleus and the adjacent oolemma. During vitellogenesis stage it can be detected at the oocyte surface, especially on the microvilli. It is also found at the microvilli covering the apical surface of the follicular epithelium and within follicle cells.

The protein resides in the cell membrane. Its function is as follows. Critical for defining the anterior-posterior and dorsal-ventral axes of the egg. May signal directly to dorsal follicle cells through the receptor torpedo (top). During oogenesis this signaling pathway instructs follicle cells to follow a dorsal pathway of development rather than the default ventral pathway. The chain is Protein gurken (grk) from Drosophila melanogaster (Fruit fly).